Here is a 98-residue protein sequence, read N- to C-terminus: Small ribosomal subunit protein bS20 (98 aa).

Positions 76–98 (HPNNGARKKSRLASKLKPIEQTA) are disordered.

It belongs to the bacterial ribosomal protein bS20 family.

Binds directly to 16S ribosomal RNA. The polypeptide is Small ribosomal subunit protein bS20 (Trichormus variabilis (strain ATCC 29413 / PCC 7937) (Anabaena variabilis)).